We begin with the raw amino-acid sequence, 196 residues long: V-type proton ATPase subunit E (196 aa).

This sequence belongs to the V-ATPase E subunit family.

Produces ATP from ADP in the presence of a proton gradient across the membrane. This is V-type proton ATPase subunit E from Clostridium botulinum (strain Eklund 17B / Type B).